The chain runs to 24 residues: Brevinin-1JDc (24 aa).

Cysteines 18 and 24 form a disulfide.

In terms of tissue distribution, expressed by the skin glands.

The protein resides in the secreted. Has antibacterial activity against E.coli ATCC 25992 (MIC=49 uM), E.coli CIB 84492 (MIC=25 uM), S.aureus ATCC 25923 (MIC=6 uM) and S.aureus CIB 85462 (MIC=3 uM). The chain is Brevinin-1JDc from Odorrana jingdongensis (Jingdong frog).